The following is a 498-amino-acid chain: ATP synthase subunit beta, chloroplastic (498 aa).

Residue 172 to 179 (GGAGVGKT) coordinates ATP.

It belongs to the ATPase alpha/beta chains family. In terms of assembly, F-type ATPases have 2 components, CF(1) - the catalytic core - and CF(0) - the membrane proton channel. CF(1) has five subunits: alpha(3), beta(3), gamma(1), delta(1), epsilon(1). CF(0) has four main subunits: a(1), b(1), b'(1) and c(9-12).

Its subcellular location is the plastid. The protein localises to the chloroplast thylakoid membrane. The enzyme catalyses ATP + H2O + 4 H(+)(in) = ADP + phosphate + 5 H(+)(out). In terms of biological role, produces ATP from ADP in the presence of a proton gradient across the membrane. The catalytic sites are hosted primarily by the beta subunits. The protein is ATP synthase subunit beta, chloroplastic of Agapanthus africanus (Lily of the Nile).